The sequence spans 469 residues: MSFLSVSRLAPKLLNSKNATYFLVAARNASASTTNLKDVLADLIPKEQSRIKNFKQQYGKTNIGQITVDMVYGGMRGMKGLVYETSVLDPEEGIRFRGYSIPECQKLLPKAPGGEEPLPEGLFWLLVTGQVPTEEQVNWVSKEWAKRAALPSHVVTMLDNFPTNLHPMSQFSAAITALNSESSFARAYSEGVHKTKYWEFVYEDSMDLIAKLPCIAAKIYRNLYREGSSIGAIDSNLDWSHNFTNMLGYSEAQFTELMRLYLTIHSDHEGGNVSAHTSHLVGSALSDPYLSFSAAMNGLAGPLHGLANQEVLVWLTALQKEMGGEVSDERMRDYIWNTLKSGRVVPGYGHAVLRKTDPRYTCQREFALKHLPNDPMFKLVAQLYKIVPNVLLEQGKAKNPWPNVDAHSGVLLQYYGMTEMNYYTVLFGVSRALGVLAQLVWSRALGFPLERPKSMSTEGLMTLVGAKSG.

The transit peptide at Met1–Ser30 directs the protein to the mitochondrion. Residues His304 and His350 contribute to the active site. Arg359 contributes to the oxaloacetate binding site. Asp405 is an active-site residue. Oxaloacetate contacts are provided by Arg431 and Arg451.

Belongs to the citrate synthase family. Homodimer.

It localises to the mitochondrion matrix. It catalyses the reaction oxaloacetate + acetyl-CoA + H2O = citrate + CoA + H(+). It functions in the pathway carbohydrate metabolism; tricarboxylic acid cycle; isocitrate from oxaloacetate: step 1/2. In terms of biological role, key enzyme of the Krebs tricarboxylic acid cycle which catalyzes the synthesis of citrate from acetyl coenzyme A and oxaloacetate. The sequence is that of Citrate synthase, mitochondrial (cs) from Thunnus albacares (Yellowfin tuna).